Reading from the N-terminus, the 660-residue chain is Bifunctional polymyxin resistance protein ArnA (660 aa).

A formyltransferase ArnAFT region spans residues 1–304; sequence MKAVVFAYHD…TLGLVAGAII (304 aa). The Proton donor; for formyltransferase activity role is filled by His104. (6R)-10-formyltetrahydrofolate-binding positions include Arg114 and 136-140; that span reads VSRAD. A dehydrogenase ArnADH region spans residues 314-660; it reads RRTRVLILGV…KTVELTEPQA (347 aa). NAD(+) is bound by residues Asp347 and 368–369; that span reads DI. UDP-alpha-D-glucuronate contacts are provided by residues Ala393, Tyr398, and 432–433; that span reads TS. Glu434 (proton acceptor; for decarboxylase activity) is an active-site residue. UDP-alpha-D-glucuronate-binding positions include Arg460, Asn492, 526–535, and Tyr613; that span reads KLIDGGRQKR. Residue Arg619 is the Proton donor; for decarboxylase activity of the active site.

It in the N-terminal section; belongs to the Fmt family. UDP-L-Ara4N formyltransferase subfamily. In the C-terminal section; belongs to the NAD(P)-dependent epimerase/dehydratase family. UDP-glucuronic acid decarboxylase subfamily. As to quaternary structure, homohexamer, formed by a dimer of trimers.

The catalysed reaction is UDP-alpha-D-glucuronate + NAD(+) = UDP-beta-L-threo-pentopyranos-4-ulose + CO2 + NADH. It catalyses the reaction UDP-4-amino-4-deoxy-beta-L-arabinose + (6R)-10-formyltetrahydrofolate = UDP-4-deoxy-4-formamido-beta-L-arabinose + (6S)-5,6,7,8-tetrahydrofolate + H(+). Its pathway is nucleotide-sugar biosynthesis; UDP-4-deoxy-4-formamido-beta-L-arabinose biosynthesis; UDP-4-deoxy-4-formamido-beta-L-arabinose from UDP-alpha-D-glucuronate: step 1/3. It participates in nucleotide-sugar biosynthesis; UDP-4-deoxy-4-formamido-beta-L-arabinose biosynthesis; UDP-4-deoxy-4-formamido-beta-L-arabinose from UDP-alpha-D-glucuronate: step 3/3. It functions in the pathway bacterial outer membrane biogenesis; lipopolysaccharide biosynthesis. In terms of biological role, bifunctional enzyme that catalyzes the oxidative decarboxylation of UDP-glucuronic acid (UDP-GlcUA) to UDP-4-keto-arabinose (UDP-Ara4O) and the addition of a formyl group to UDP-4-amino-4-deoxy-L-arabinose (UDP-L-Ara4N) to form UDP-L-4-formamido-arabinose (UDP-L-Ara4FN). The modified arabinose is attached to lipid A and is required for resistance to polymyxin and cationic antimicrobial peptides. This chain is Bifunctional polymyxin resistance protein ArnA, found in Enterobacter sp. (strain 638).